Here is a 92-residue protein sequence, read N- to C-terminus: Small ribosomal subunit protein uS19 (92 aa).

Belongs to the universal ribosomal protein uS19 family.

In terms of biological role, protein S19 forms a complex with S13 that binds strongly to the 16S ribosomal RNA. The sequence is that of Small ribosomal subunit protein uS19 from Caulobacter vibrioides (strain ATCC 19089 / CIP 103742 / CB 15) (Caulobacter crescentus).